The chain runs to 405 residues: BRCA1-A complex subunit Abraxas 1 (405 aa).

An MPN domain is found at 7–154; sequence LGVLSGFVLG…CTHCLEHGLY (148 aa). Ser-48 carries the phosphoserine modification. The stretch at 208–262 forms a coiled coil; it reads SLKEVRKINEMYAAIQEELKTICQKVEQSEREVEKLLMDVNRLKEVRKKQQAQAK. Positions 333 to 405 are disordered; it reads ASPAPAAPLS…DTDYPRSPTF (73 aa). Residues Ser-382, Ser-383, Ser-392, and Ser-402 each carry the phosphoserine modification. Positions 386 to 397 are enriched in acidic residues; sequence IDTEVGSPEDDT. Residues 402 to 405 carry the pSXXF motif motif; it reads SPTF.

This sequence belongs to the FAM175 family. Abraxas subfamily. As to quaternary structure, component of the ARISC complex, at least composed of UIMC1/RAP80, ABRAXAS1, BRCC3/BRCC36, BABAM2 and BABAM1/NBA1. Component of the BRCA1-A complex, at least composed of the BRCA1, BARD1, UIMC1/RAP80, ABRAXAS1, BRCC3/BRCC36, BABAM2 and BABAM1/NBA1. In the complex, interacts directly with UIMC1/RAP80, BRCC3/BRCC36 and BABAM2. Homodimer. Interacts directly (when phosphorylated at Ser-402) with BRCA1. The phosphorylated homodimer can interact directly with two BRCA1 chains, giving rise to a heterotetramer. Binds polyubiquitin. Post-translationally, phosphorylation of Ser-402 of the pSXXF motif by ATM or ATR constitutes a specific recognition motif for the BRCT domain of BRCA1.

The protein resides in the nucleus. Involved in DNA damage response and double-strand break (DSB) repair. Component of the BRCA1-A complex, acting as a central scaffold protein that assembles the various components of the complex and mediates the recruitment of BRCA1. The BRCA1-A complex specifically recognizes 'Lys-63'-linked ubiquitinated histones H2A and H2AX at DNA lesion sites, leading to target the BRCA1-BARD1 heterodimer to sites of DNA damage at DSBs. This complex also possesses deubiquitinase activity that specifically removes 'Lys-63'-linked ubiquitin on histones H2A and H2AX. The polypeptide is BRCA1-A complex subunit Abraxas 1 (Rattus norvegicus (Rat)).